Consider the following 656-residue polypeptide: ATP-dependent zinc metalloprotease FtsH (656 aa).

Topologically, residues 1-10 (MGDNRWLKNS) are cytoplasmic. The chain crosses the membrane as a helical span at residues 11-31 (FVYLIILVAALALFFQYLGPG). At 32 to 116 (ASQTEEKGIA…IVQPAPAWGG (85 aa)) the chain is on the extracellular side. The helical transmembrane segment at 117-137 (LLSIFTILLPTLLLIGFFVFF) threads the bilayer. Topologically, residues 138-656 (MRQAQGSNNQ…GLGGPSPLPA (519 aa)) are cytoplasmic. 209-216 (GPPGTGKT) is a binding site for ATP. His432 is a binding site for Zn(2+). Glu433 is a catalytic residue. His436 and Asp511 together coordinate Zn(2+). A compositionally biased stretch (polar residues) spans 622–632 (FSKSGSTTPNG). Positions 622–656 (FSKSGSTTPNGRTEDRPAQPDAPQMGLGGPSPLPA) are disordered.

The protein in the central section; belongs to the AAA ATPase family. In the C-terminal section; belongs to the peptidase M41 family. In terms of assembly, homohexamer. Zn(2+) is required as a cofactor.

It is found in the cell membrane. Its function is as follows. Acts as a processive, ATP-dependent zinc metallopeptidase for both cytoplasmic and membrane proteins. Plays a role in the quality control of integral membrane proteins. In Chloroflexus aggregans (strain MD-66 / DSM 9485), this protein is ATP-dependent zinc metalloprotease FtsH.